The sequence spans 323 residues: Protein translocase subunit SecF (323 aa).

A run of 6 helical transmembrane segments spans residues 19 to 39 (GVIV…FKGF), 138 to 158 (ILSL…RYEW), 162 to 182 (LASV…VIVF), 189 to 209 (EVIA…IIIF), 244 to 264 (LTVF…IIGF), and 269 to 289 (LIGT…VALL).

This sequence belongs to the SecD/SecF family. SecF subfamily. As to quaternary structure, forms a complex with SecD. Part of the essential Sec protein translocation apparatus which comprises SecA, SecYEG and auxiliary proteins SecDF-YajC and YidC.

Its subcellular location is the cell inner membrane. In terms of biological role, part of the Sec protein translocase complex. Interacts with the SecYEG preprotein conducting channel. SecDF uses the proton motive force (PMF) to complete protein translocation after the ATP-dependent function of SecA. This Helicobacter pylori (strain ATCC 700392 / 26695) (Campylobacter pylori) protein is Protein translocase subunit SecF.